Consider the following 193-residue polypeptide: Cbp/p300-interacting transactivator 1 (193 aa).

Disordered regions lie at residues M1–M26, V50–A88, and G106–I147. A compositionally biased stretch (low complexity) spans G54–T73. A Nuclear export signal motif is present at residues L158–L167.

This sequence belongs to the CITED family. Interacts (via C-terminus) with CREBBP. Interacts with EGR2. Homodimer. Binds to RBM14. Interacts (via N-terminus) with HSPA8; the interaction suppresses the association of CITED1 with p300/CBP and SMAD-mediated transcription transactivation. Interacts (via C-terminus) with TOX3 (via HGM box); the interaction increases estrogen-response element (ERE)-dependent transcription and protection against cell death. Interacts with ESR1; the interaction occurs in a estrogen-dependent manner. Interacts (unphosphorylated form preferentially and via C-terminus) with EP300. Phosphorylated. Phosphorylation changes in a cell cycle-dependent manner and reduces its transcriptional coactivator activity. In terms of tissue distribution, expressed only in melanocytes and testis.

The protein resides in the nucleus. Its subcellular location is the cytoplasm. In terms of biological role, transcriptional coactivator of the p300/CBP-mediated transcription complex. Enhances SMAD-mediated transcription by strengthening the functional link between the DNA-binding SMAD transcription factors and the p300/CBP transcription coactivator complex. Stimulates estrogen-dependent transactivation activity mediated by estrogen receptors signaling; stabilizes the interaction of estrogen receptor ESR1 and histone acetyltransferase EP300. Positively regulates TGF-beta signaling through its association with the SMAD/p300/CBP-mediated transcriptional coactivator complex. Induces transcription from estrogen-responsive promoters and protection against cell death. Potentiates EGR2-mediated transcriptional activation activity from the ERBB2 promoter. Acts as an inhibitor of osteoblastic mineralization through a cAMP-dependent parathyroid hormone receptor signaling. May play a role in pigmentation of melanocytes. Associates with chromatin to the estrogen-responsive TGF-alpha promoter region in a estrogen-dependent manner. This is Cbp/p300-interacting transactivator 1 (CITED1) from Homo sapiens (Human).